A 115-amino-acid chain; its full sequence is Histone H2A-Bbd type 2/3 (115 aa).

The interval 1–21 is disordered; that stretch reads MPRRRRRRGSSGAGGRGRTCS. A docking domain region spans residues 87–115; the sequence is LLDMVVHNDRLLSTLFNTTTISQVAPGED.

The protein belongs to the histone H2A family. As to quaternary structure, the nucleosome is a histone octamer containing two molecules each of H2A, H2B, H3 and H4 assembled in one H3-H4 heterotetramer and two H2A-H2B heterodimers. May be incorporated into a proportion of nucleosomes, replacing one or more H2A molecules. As to expression, present in mature sperm.

It is found in the nucleus. Its subcellular location is the chromosome. Its function is as follows. Atypical histone H2A which can replace conventional H2A in some nucleosomes and is associated with active transcription and mRNA processing. Nucleosomes wrap and compact DNA into chromatin, limiting DNA accessibility to the cellular machineries which require DNA as a template. Histones thereby play a central role in transcription regulation, DNA repair, DNA replication and chromosomal stability. Nucleosomes containing this histone are less rigid and organize less DNA than canonical nucleosomes in vivo. They are enriched in actively transcribed genes and associate with the elongating form of RNA polymerase. They associate with spliceosome components and are required for mRNA splicing. May participate in spermatogenesis. The polypeptide is Histone H2A-Bbd type 2/3 (Homo sapiens (Human)).